Consider the following 572-residue polypeptide: Phosphoenolpyruvate-protein phosphotransferase (572 aa).

Catalysis depends on histidine 191, which acts as the Tele-phosphohistidine intermediate. Residues arginine 298 and arginine 334 each coordinate phosphoenolpyruvate. 2 residues coordinate Mg(2+): glutamate 433 and aspartate 457. Residues 456-457 and arginine 467 contribute to the phosphoenolpyruvate site; that span reads ND. The active-site Proton donor is the cysteine 504.

It belongs to the PEP-utilizing enzyme family. In terms of assembly, homodimer. Requires Mg(2+) as cofactor.

It localises to the cytoplasm. It catalyses the reaction L-histidyl-[protein] + phosphoenolpyruvate = N(pros)-phospho-L-histidyl-[protein] + pyruvate. In terms of biological role, general (non sugar-specific) component of the phosphoenolpyruvate-dependent sugar phosphotransferase system (sugar PTS). This major carbohydrate active-transport system catalyzes the phosphorylation of incoming sugar substrates concomitantly with their translocation across the cell membrane. Enzyme I transfers the phosphoryl group from phosphoenolpyruvate (PEP) to the phosphoryl carrier protein (HPr). The sequence is that of Phosphoenolpyruvate-protein phosphotransferase (ptsI) from Staphylococcus epidermidis (strain ATCC 35984 / DSM 28319 / BCRC 17069 / CCUG 31568 / BM 3577 / RP62A).